The following is an 87-amino-acid chain: Chaperone NapD (87 aa).

The protein belongs to the NapD family. As to quaternary structure, interacts with the cytoplasmic NapA precursor.

It is found in the cytoplasm. In terms of biological role, chaperone for NapA, the catalytic subunit of the periplasmic nitrate reductase. It binds directly and specifically to the twin-arginine signal peptide of NapA, preventing premature interaction with the Tat translocase and premature export. The protein is Chaperone NapD of Escherichia coli O157:H7.